The following is a 959-amino-acid chain: Isoleucine--tRNA ligase (959 aa).

The 'HIGH' region signature appears at 60-70 (PYANGSLHMGH). Glutamate 569 serves as a coordination point for L-isoleucyl-5'-AMP. The 'KMSKS' region motif lies at 610–614 (KMSKS). An ATP-binding site is contributed by lysine 613. Zn(2+) contacts are provided by cysteine 928, cysteine 931, cysteine 948, and cysteine 951.

Belongs to the class-I aminoacyl-tRNA synthetase family. IleS type 1 subfamily. In terms of assembly, monomer. Zn(2+) serves as cofactor.

Its subcellular location is the cytoplasm. The catalysed reaction is tRNA(Ile) + L-isoleucine + ATP = L-isoleucyl-tRNA(Ile) + AMP + diphosphate. Catalyzes the attachment of isoleucine to tRNA(Ile). As IleRS can inadvertently accommodate and process structurally similar amino acids such as valine, to avoid such errors it has two additional distinct tRNA(Ile)-dependent editing activities. One activity is designated as 'pretransfer' editing and involves the hydrolysis of activated Val-AMP. The other activity is designated 'posttransfer' editing and involves deacylation of mischarged Val-tRNA(Ile). This is Isoleucine--tRNA ligase from Rippkaea orientalis (strain PCC 8801 / RF-1) (Cyanothece sp. (strain PCC 8801)).